A 317-amino-acid chain; its full sequence is MRLAVVCFCLFGLASCLPVKVAEFGSSEEKAHYSKHSDAVATWLKPDPSQKQNLLAPQNSVSSEETDDFKQETLPSNSNESHDHMDDDDDDDDDGDHAESEDSVNSDESDESHHSDESDESFTASTQADVLTPIAPTVDVPDGRGDSLAYGLRSKSRSFPVSDEQYPDATDEDLTSRMKSQESDEAIKVIPVAQRLSVPSDQDSNGKTSHESSQLDEPSVETHSLEQSKEYKQRASHESTEQSDAIDSAEKPDAIDSAERSDAIDSQASSKASLEHQSHEFHSHEDKLVLDPKSKEDDRYLKFRISHELESSSSEVN.

Positions 1–16 are cleaved as a signal peptide; it reads MRLAVVCFCLFGLASC. Phosphoserine is present on residues S26, S27, S60, S62, and S63. The disordered stretch occupies residues 43–297; that stretch reads WLKPDPSQKQ…LVLDPKSKED (255 aa). The span at 49–63 shows a compositional bias: polar residues; that stretch reads SQKQNLLAPQNSVSS. The residue at position 66 (T66) is a Phosphothreonine. S76, S78, S81, S106, S109, S112, S115, and S118 each carry phosphoserine. Acidic residues predominate over residues 86–110; that stretch reads DDDDDDDDDGDHAESEDSVNSDESD. O-linked (GalNAc...) threonine glycans are attached at residues T123, T132, and T137. Residues 144 to 146 carry the Cell attachment site motif; that stretch reads RGD. A phosphothreonine mark is found at T170 and T175. The segment covering 174–187 has biased composition (basic and acidic residues); that stretch reads LTSRMKSQESDEAI. Phosphoserine occurs at positions 176, 180, 200, 204, 209, 213, and 219. The span at 197 to 216 shows a compositional bias: polar residues; it reads SVPSDQDSNGKTSHESSQLD. O-linked (Xyl...) (chondroitin sulfate) serine glycosylation is present at S219. T222 bears the Phosphothreonine mark. Basic and acidic residues-rich tracts occupy residues 223 to 240 and 248 to 263; these read HSLE…HEST and SAEK…RSDA. 14 positions are modified to phosphoserine: S224, S228, S257, S261, S266, S270, S273, S278, S283, S294, S306, S311, S313, and S314. Over residues 273–297 the composition is skewed to basic and acidic residues; it reads SLEHQSHEFHSHEDKLVLDPKSKED. An O-linked (Xyl...) (chondroitin sulfate) serine glycan is attached at S311.

It belongs to the osteopontin family. In terms of assembly, interacts (via N-terminus) with integrin ITGA9:ITGB1. In terms of processing, extensively phosphorylated by FAM20C in the extracellular medium at multiple sites within the S-x-E/pS motif. The phosphorylated form inhibits hydroxyapatite crystallization. Dephosphorylation via a mechanism involving ALPL/TNAP promotes hydroxyapatite crystallization. Post-translationally, O-glycosylated. Forms covalent cross-links mediated by transglutaminase TGM2, between a glutamine and the epsilon-amino group of a lysine residue, forming homopolymers and heteropolymers, increasing its collagen binding properties.

Its subcellular location is the secreted. Its function is as follows. Major non-collagenous bone protein that binds tightly to hydroxyapatite. Appears to form an integral part of the mineralized matrix. Probably important to cell-matrix interaction. Functionally, acts as a cytokine involved in enhancing production of interferon-gamma and interleukin-12 and reducing production of interleukin-10 and is essential in the pathway that leads to type I immunity. The sequence is that of Osteopontin (Spp1) from Rattus norvegicus (Rat).